A 480-amino-acid polypeptide reads, in one-letter code: Protein U54 (480 aa).

In Elephas maximus (Indian elephant), this protein is Protein U54.